Consider the following 647-residue polypeptide: Protein arginine N-methyltransferase 7 (647 aa).

SAM-dependent MTase PRMT-type domains lie at 12–332 and 337–647; these read EREW…FSLW and GKDK…SEDS. Residues E140 and E149 contribute to the active site.

It belongs to the class I-like SAM-binding methyltransferase superfamily. Protein arginine N-methyltransferase family. PRMT7 subfamily.

Functionally, arginine methyltransferase that can both catalyze the formation of omega-N monomethylarginine (MMA) and symmetrical dimethylarginine (sDMA). In Caenorhabditis elegans, this protein is Protein arginine N-methyltransferase 7 (prmt-7).